The following is a 63-amino-acid chain: Large ribosomal subunit protein bL28 (63 aa).

This sequence belongs to the bacterial ribosomal protein bL28 family.

This is Large ribosomal subunit protein bL28 from Desulfitobacterium hafniense (strain DSM 10664 / DCB-2).